The chain runs to 273 residues: Bifunctional protein FolD (273 aa).

Residues 155 to 157, Ser-182, and Ile-223 each bind NADP(+); that span reads GRS.

Belongs to the tetrahydrofolate dehydrogenase/cyclohydrolase family. As to quaternary structure, homodimer.

The catalysed reaction is (6R)-5,10-methylene-5,6,7,8-tetrahydrofolate + NADP(+) = (6R)-5,10-methenyltetrahydrofolate + NADPH. It catalyses the reaction (6R)-5,10-methenyltetrahydrofolate + H2O = (6R)-10-formyltetrahydrofolate + H(+). It functions in the pathway one-carbon metabolism; tetrahydrofolate interconversion. Its function is as follows. Catalyzes the oxidation of 5,10-methylenetetrahydrofolate to 5,10-methenyltetrahydrofolate and then the hydrolysis of 5,10-methenyltetrahydrofolate to 10-formyltetrahydrofolate. The sequence is that of Bifunctional protein FolD from Pseudothermotoga lettingae (strain ATCC BAA-301 / DSM 14385 / NBRC 107922 / TMO) (Thermotoga lettingae).